The following is a 447-amino-acid chain: GTPase Der (447 aa).

EngA-type G domains lie at 3–167 (PVIA…VQER) and 181–354 (VKIA…AAAM). GTP-binding positions include 9–16 (GRPNVGKS), 56–60 (DTGGF), 119–122 (NKAE), 187–194 (GRPNVGKS), 234–238 (DTAGL), and 299–302 (NKWD). The region spanning 355–439 (VKLPTPQLTR…PLRIEFRTNK (85 aa)) is the KH-like domain.

The protein belongs to the TRAFAC class TrmE-Era-EngA-EngB-Septin-like GTPase superfamily. EngA (Der) GTPase family. In terms of assembly, associates with the 50S ribosomal subunit.

GTPase that plays an essential role in the late steps of ribosome biogenesis. The sequence is that of GTPase Der from Cupriavidus pinatubonensis (strain JMP 134 / LMG 1197) (Cupriavidus necator (strain JMP 134)).